The chain runs to 239 residues: Metallo-beta-lactamase IND-1 (239 aa).

The signal sequence occupies residues 1–20 (MKKSIRFFIVSILLSPFASA). Positions 96, 98, 100, 159, and 178 each coordinate Zn(2+). K181 is an a beta-lactam binding site. H220 serves as a coordination point for Zn(2+).

It belongs to the metallo-beta-lactamase superfamily. Class-B beta-lactamase family. In terms of assembly, monomer. It depends on Zn(2+) as a cofactor.

Its subcellular location is the periplasm. It carries out the reaction a beta-lactam + H2O = a substituted beta-amino acid. Its activity is regulated as follows. Inhibited by chelating agents such as EDTA. Not susceptible to inactivation by the beta-lactamase-blocking agent clavulanic acid. Class B beta-lactamase which confers resistance to the beta-lactam antibiotics, including penicillins, cephalosporins and carbapenems. Acts via hydrolysis of the beta-lactam ring. Has penicillin-, cephalosporin- and carbapenem-hydrolyzing activities. This Chryseobacterium indologenes (Flavobacterium indologenes) protein is Metallo-beta-lactamase IND-1.